The sequence spans 303 residues: Pycsar effector protein BcPycTIR (303 aa).

Position 22-138 (22-138) interacts with a nucleoside 3',5'-cyclic phosphate; that stretch reads KLVGGDKGLA…RRMAKELSKR (117 aa). Positions 154 to 273 are TIR-like; sequence RVFVISSAEA…DMAGVTTIPY (120 aa).

In terms of assembly, purified protein forms large 2-dimensional sheets when incubated with cUMP and shorter filaments in the presence of cCMP.

It localises to the cytoplasm. The catalysed reaction is NAD(+) + H2O = ADP-D-ribose + nicotinamide + H(+). Activated by cyclic UMP (cUMP) and to a lesser extent by cCMP. In terms of biological role, pycsar (pyrimidine cyclase system for antiphage resistance) provides immunity against bacteriophage. The pyrimidine cyclase (PycC) synthesizes cyclic nucleotides in response to infection; these serve as specific second messenger signals. The signals activate the adjacent effector, leading to bacterial cell death and abortive phage infection. A clade B Pycsar system. Functionally, the effector protein of a two-gene Pycsar system. Upon activation by cyclic UMP (cUMP) degrades cellular NAD(+). Expression of this and adjacent uridylate cyclase BcPycC (AC A0A0J5ZXG5) probably confers resistance to bacteriophage. The genes are probably only expressed in response to bacteriophage infection. This protein probably only responds to cUMP (produced by its cognate NTP cyclase). This is Pycsar effector protein BcPycTIR from Burkholderia cepacia (Pseudomonas cepacia).